Reading from the N-terminus, the 411-residue chain is MAEAPVDLSTGDNLEQKILQVLSDDGGPVKIGQLVKKCQVPKKTLNQVLYRLKKEDRVSSPEPATWSIGGAASGDGAPAIPENSSAQPSLDERILRFLEANGPHRALHIAKALGMTTAKEVNPLLYSMRNKHLLSYDGQTWKIYHSRQEGQDIAHSGVTQESPAIICQHNPVNMICQQGANSHISIANSNAIQIGHGNVIVREKACGEPGPRTSHPLPLAWDASAQDMPPVAHGAQYIYMDKSLLQQVQLGHHNEMSLVGDAGKHPSYSFSDSPPEVSTTTADPGASFNMQTFEPGPHPEGDTVQTVHIKSCFLEDATIGNGNKMTIHLRSKGEVMESGDSEEPKKEDTGTSSEATPPRSCQHTPSDSMLPTSELRAMALGDSSPQTTEPVLREHEVQDIESSQDTGLSKQ.

Z-binding domains lie at 8 to 70 (LSTG…SIGG) and 84 to 148 (SSAQ…HSRQ). Residues Lys-17 and Lys-43 each participate in a glycyl lysine isopeptide (Lys-Gly) (interchain with G-Cter in ubiquitin) cross-link. The segment at 60-86 (SPEPATWSIGGAASGDGAPAIPENSSA) is disordered. 2 consecutive short sequence motifs (RIP homotypic interaction motif (RHIM)) follow at residues 188 to 205 (NSNA…REKA) and 237 to 261 (YIYM…LVGD). Disordered regions lie at residues 263-303 (GKHP…EGDT) and 332-411 (KGEV…LSKQ). 3 stretches are compositionally biased toward polar residues: residues 268–292 (YSFS…NMQT), 350–371 (GTSS…SMLP), and 400–411 (IESSQDTGLSKQ).

Homodimer. Interacts (via RIP homotypic interaction motif) with RIPK3; leading to RIPK3 activation and necroptosis; interaction is enhanced by CASP6. Interacts (via RIP homotypic interaction motif) with RIPK1. Component of the AIM2 PANoptosome complex, a multiprotein complex that drives inflammatory cell death (PANoptosis). As to quaternary structure, (Microbial infection) Interacts (via RIP homotypic interaction motif) with murid herpesvirus protein RIR1 (via RIP homotypic interaction motif); leading to inhibition of ZBP1-dependent necroptosis. In terms of assembly, (Microbial infection) Interacts with vaccinia virus E3 protein; leading to inhibit ZBP1-dependent necroptosis. In terms of processing, ubiquitinated; polyubiquitinated following influenza A virus (IAV) infection. Post-translationally, phosphorylated. In terms of tissue distribution, expressed in lung, spleen and liver. Lower levels were seen in heart, kidney and testis. Expression is greatly up-regulated in tumor stromal cells and activated macrophages.

The protein resides in the cytoplasm. It localises to the nucleus. ZBP1-dependent necroptosis is normally inhibited by RIPK1: RIPK1 inhibits the ZBP1-induced activation of RIPK3 via FADD-mediated recruitment of CASP8, which cleaves RIPK1 and limits TNF-induced necroptosis. In terms of biological role, key innate sensor that recognizes and binds Z-RNA structures, which are produced by a number of viruses, such as herpesvirus, orthomyxovirus or flavivirus, and triggers different forms of cell death. ZBP1 acts as an essential mediator of pyroptosis, necroptosis and apoptosis (PANoptosis), an integral part of host defense against pathogens, by activating RIPK3, caspase-8 (CASP8), and the NLRP3 inflammasome. Key activator of necroptosis, a programmed cell death process in response to death-inducing TNF-alpha family members, via its ability to bind Z-RNA: once activated upon Z-RNA-binding, ZBP1 interacts and stimulates RIPK3 kinase, which phosphorylates and activates MLKL, triggering execution of programmed necrosis. In addition to TNF-induced necroptosis, necroptosis can also take place in the nucleus in response to orthomyxoviruses infection: ZBP1 recognizes and binds Z-RNA structures that are produced in infected nuclei by orthomyxoviruses, such as the influenza A virus (IAV), leading to ZBP1 activation, RIPK3 stimulation and subsequent MLKL phosphorylation, triggering disruption of the nuclear envelope and leakage of cellular DNA into the cytosol. ZBP1-dependent cell death in response to IAV infection promotes interleukin-1 alpha (IL1A) induction in an NLRP3-inflammasome-independent manner: IL1A expression is required for the optimal interleukin-1 beta (IL1B) production, and together, these cytokines promote infiltration of inflammatory neutrophils to the lung, leading to the formation of neutrophil extracellular traps. In addition to its direct role in driving necroptosis via its ability to sense Z-RNAs, also involved in PANoptosis triggered in response to bacterial infection: component of the AIM2 PANoptosome complex, a multiprotein complex that triggers PANoptosis. Also acts as the apical sensor of fungal infection responsible for activating PANoptosis. Involved in CASP8-mediated cell death via its interaction with RIPK1 but independently of its ability to sense Z-RNAs. In some cell types, also able to restrict viral replication by promoting cell death-independent responses. In response to flavivirus infection in neurons, promotes a cell death-independent pathway that restricts viral replication: together with RIPK3, promotes a death-independent transcriptional program that modifies the cellular metabolism via up-regulation expression of the enzyme ACOD1/IRG1 and production of the metabolite itaconate. Itaconate inhibits the activity of succinate dehydrogenase, generating a metabolic state in neurons that suppresses replication of viral genomes. The polypeptide is Z-DNA-binding protein 1 (Mus musculus (Mouse)).